The sequence spans 224 residues: Small ribosomal subunit protein uS3 (224 aa).

One can recognise a KH type-2 domain in the interval 38–106 (IRKFISEKLK…QVHINIVEIK (69 aa)).

Belongs to the universal ribosomal protein uS3 family. In terms of assembly, part of the 30S ribosomal subunit. Forms a tight complex with proteins S10 and S14.

Binds the lower part of the 30S subunit head. Binds mRNA in the 70S ribosome, positioning it for translation. The polypeptide is Small ribosomal subunit protein uS3 (Lactobacillus acidophilus (strain ATCC 700396 / NCK56 / N2 / NCFM)).